The sequence spans 172 residues: Propanediol dehydratase small subunit (172 aa).

It belongs to the diol/glycerol dehydratase small subunit family. The propanediol dehydratase enzyme is a heterotrimeric complex composed of a large (PduC), a medium (PduD) and a small (PduE) subunit. Adenosylcob(III)alamin is required as a cofactor.

It is found in the bacterial microcompartment. It catalyses the reaction propane-1,2-diol = propanal + H2O. The protein operates within polyol metabolism; 1,2-propanediol degradation. In terms of biological role, part of the PduCDE complex that catalyzes the dehydration of 1,2-propanediol (1,2-PD) to propionaldehyde. Localized in the bacterial microcompartment (BMC) dedicated to 1,2-PD degradation. Expression of a cosmid containing the full 21-gene pdu operon in E.coli allows E.coli to grow on 1,2-propanediol (1,2-PD) with the appearance of BMCs in its cytoplasm. Its function is as follows. The 1,2-PD-specific bacterial microcompartment (BMC) concentrates low levels of 1,2-PD catabolic enzymes, concentrates volatile reaction intermediates thus enhancing pathway flux and keeps the level of toxic, mutagenic propionaldehyde low. In Citrobacter freundii, this protein is Propanediol dehydratase small subunit.